The following is a 218-amino-acid chain: Probable nicotinate-nucleotide adenylyltransferase (218 aa).

The protein belongs to the NadD family.

The enzyme catalyses nicotinate beta-D-ribonucleotide + ATP + H(+) = deamido-NAD(+) + diphosphate. It participates in cofactor biosynthesis; NAD(+) biosynthesis; deamido-NAD(+) from nicotinate D-ribonucleotide: step 1/1. Catalyzes the reversible adenylation of nicotinate mononucleotide (NaMN) to nicotinic acid adenine dinucleotide (NaAD). The sequence is that of Probable nicotinate-nucleotide adenylyltransferase from Sodalis glossinidius (strain morsitans).